Reading from the N-terminus, the 830-residue chain is Vacuolar protein sorting-associated protein 11 homolog (830 aa).

The RING-type; atypical zinc-finger motif lies at 733–775 (CDICREMLSMQSIYFLCQHSFHEECLNYKSTKRQEKFLCIICK).

The protein belongs to the VPS11 family. Part of the homotypic fusion and vacuole protein sorting (HOPS) complex, composed of Vps16A, car/Vps33A, dor/Vps18, Vps39, Vps11 and lt/Vps41. Unlike in other species, not part of the class C core vacuole/endosome tethering (CORVET) complex.

It is found in the late endosome membrane. The protein resides in the lysosome membrane. Functionally, part of the homotypic fusion and vacuole protein sorting (HOPS) tethering complex involved in endo-lysosomal vesicle trafficking and lysosome biogenesis, but unlike in many other species does not form part of the class C core vacuole/endosome tethering (CORVET) complex. The HOPS complex facilitates docking and fusion of lysosomes with late endosomes and several other types of vesicles. The HOPS complex is also involved in autophagy, pigment granule biogenesis and crinophagy (the elimination of unused secretory granules through fusion with lysosomes). The HOPS complex probably instigates autophagosome-lysosome fusion by binding autophagosome-associated Syx17/syntaxin 17 and promoting assembly of the trans-SNARE complex. Independent of Syx17/syntaxin 17, HOPS is involved in biosynthetic transport to lysosomes and lysosome-related organelles such as eye-pigment granules. Required for autophagocytosis-dependent remodeling of myofibrils and transverse-tubules (T-tubules) during metamorphosis. The chain is Vacuolar protein sorting-associated protein 11 homolog from Drosophila melanogaster (Fruit fly).